Here is a 233-residue protein sequence, read N- to C-terminus: uncharacterized protein (233 aa).

The next 3 helical transmembrane spans lie at 4-24 (LAILLSILAIGLILLIINHDT), 35-55 (FGQLVSLGAIATLIGAGILQS), and 66-86 (IAIWLFVVLALVSAYVYRFEL).

Its subcellular location is the cell membrane. This is an uncharacterized protein from Sinorhizobium sp.